The sequence spans 191 residues: UPF0312 protein Shewana3_1179 (191 aa).

The N-terminal stretch at 1 to 22 is a signal peptide; sequence MKKQLLAALIGGSLLAPMAASA.

It belongs to the UPF0312 family. Type 1 subfamily.

The protein localises to the periplasm. In Shewanella sp. (strain ANA-3), this protein is UPF0312 protein Shewana3_1179.